Here is a 440-residue protein sequence, read N- to C-terminus: 23S rRNA (uracil(1939)-C(5))-methyltransferase RlmD (440 aa).

The segment at 1–21 (MRRRTSPRRTTTSKPQPIGPI) is disordered. In terms of domain architecture, TRAM spans 15–73 (PQPIGPIQTFEVDGLTHEAKGVARLQGKVTFIEGALPGETVEAQVNKAGRRFDEAVLVN). Residues cysteine 86, cysteine 92, cysteine 95, and cysteine 169 each coordinate [4Fe-4S] cluster. S-adenosyl-L-methionine contacts are provided by glutamine 273, phenylalanine 302, asparagine 307, glutamate 323, aspartate 350, and aspartate 370. Cysteine 396 functions as the Nucleophile in the catalytic mechanism.

This sequence belongs to the class I-like SAM-binding methyltransferase superfamily. RNA M5U methyltransferase family. RlmD subfamily.

It catalyses the reaction uridine(1939) in 23S rRNA + S-adenosyl-L-methionine = 5-methyluridine(1939) in 23S rRNA + S-adenosyl-L-homocysteine + H(+). Functionally, catalyzes the formation of 5-methyl-uridine at position 1939 (m5U1939) in 23S rRNA. The polypeptide is 23S rRNA (uracil(1939)-C(5))-methyltransferase RlmD (Marinomonas sp. (strain MWYL1)).